We begin with the raw amino-acid sequence, 548 residues long: Folylpolyglutamate synthase (548 aa).

ATP is bound at residue 130 to 133 (GKGS). Positions 157, 234, and 262 each coordinate Mg(2+). Arg-382 and Asp-396 together coordinate ATP.

It belongs to the folylpolyglutamate synthase family. Requires a monovalent cation as cofactor.

Its subcellular location is the mitochondrion inner membrane. It is found in the mitochondrion matrix. The protein resides in the cytoplasm. It carries out the reaction (6S)-5,6,7,8-tetrahydrofolyl-(gamma-L-Glu)(n) + L-glutamate + ATP = (6S)-5,6,7,8-tetrahydrofolyl-(gamma-L-Glu)(n+1) + ADP + phosphate + H(+). It participates in cofactor biosynthesis; tetrahydrofolylpolyglutamate biosynthesis. Functionally, catalyzes conversion of folates to polyglutamate derivatives allowing concentration of folate compounds in the cell and the intracellular retention of these cofactors, which are important substrates for most of the folate-dependent enzymes that are involved in one-carbon transfer reactions involved in purine, pyrimidine and amino acid synthesis. Required for methionine synthesis and maintenance of intact mitochondrial DNA. Involved in telomere maintenance. The protein is Folylpolyglutamate synthase of Saccharomyces cerevisiae (strain AWRI1631) (Baker's yeast).